Reading from the N-terminus, the 445-residue chain is tRNA(Ile)-lysidine synthase (445 aa).

38–43 (SGGLDS) serves as a coordination point for ATP.

Belongs to the tRNA(Ile)-lysidine synthase family.

The protein localises to the cytoplasm. The catalysed reaction is cytidine(34) in tRNA(Ile2) + L-lysine + ATP = lysidine(34) in tRNA(Ile2) + AMP + diphosphate + H(+). Functionally, ligates lysine onto the cytidine present at position 34 of the AUA codon-specific tRNA(Ile) that contains the anticodon CAU, in an ATP-dependent manner. Cytidine is converted to lysidine, thus changing the amino acid specificity of the tRNA from methionine to isoleucine. This Neisseria gonorrhoeae (strain ATCC 700825 / FA 1090) protein is tRNA(Ile)-lysidine synthase.